A 217-amino-acid polypeptide reads, in one-letter code: MARKGILGTKLGMTQVFDENNKVVPVTVVKAGPNVVTRIRTPERDGYSAVQLAYGEISPRKVNKPVTGQYTAAGVNPRRHLAELRLDDAEAVTEYEVGQELTAEIFADGSYVDVTGTSKGKGFAGTMKRHGFSGQGASHGAQAVHRRPGSIGGCATPARVFKGTRMAGRMGNDRVTVQNLLVHKVDAEQSVLLIKGAVPGRTGGLVTVRSAIKRGEK.

Belongs to the universal ribosomal protein uL3 family. As to quaternary structure, part of the 50S ribosomal subunit. Forms a cluster with proteins L14 and L19.

One of the primary rRNA binding proteins, it binds directly near the 3'-end of the 23S rRNA, where it nucleates assembly of the 50S subunit. The sequence is that of Large ribosomal subunit protein uL3 from Mycobacterium ulcerans (strain Agy99).